The chain runs to 673 residues: UvrABC system protein C (673 aa).

The GIY-YIG domain maps to 16–95; that stretch reads VEPGVYKFRD…IKEFDPRFNV (80 aa). The UVR domain occupies 208–243; the sequence is DKMVRELERRMHAAAEDLDFETAARLRDDVQALRRA. Residues 488-526 are disordered; sequence RDEAERDELDGTAAGAPLVDDDETPTSRPGIDPTTGRPR.

The protein belongs to the UvrC family. As to quaternary structure, interacts with UvrB in an incision complex.

It is found in the cytoplasm. The UvrABC repair system catalyzes the recognition and processing of DNA lesions. UvrC both incises the 5' and 3' sides of the lesion. The N-terminal half is responsible for the 3' incision and the C-terminal half is responsible for the 5' incision. The chain is UvrABC system protein C from Nocardia farcinica (strain IFM 10152).